The primary structure comprises 147 residues: Small ribosomal subunit protein uS12 (147 aa).

This sequence belongs to the universal ribosomal protein uS12 family. As to quaternary structure, part of the 30S ribosomal subunit.

Functionally, with S4 and S5 plays an important role in translational accuracy. Located at the interface of the 30S and 50S subunits. In Pyrobaculum calidifontis (strain DSM 21063 / JCM 11548 / VA1), this protein is Small ribosomal subunit protein uS12.